A 390-amino-acid polypeptide reads, in one-letter code: NADH-quinone oxidoreductase subunit D (390 aa).

It belongs to the complex I 49 kDa subunit family. As to quaternary structure, NDH-1 is composed of 14 different subunits. Subunits NuoB, C, D, E, F, and G constitute the peripheral sector of the complex.

Its subcellular location is the cell membrane. The catalysed reaction is a quinone + NADH + 5 H(+)(in) = a quinol + NAD(+) + 4 H(+)(out). NDH-1 shuttles electrons from NADH, via FMN and iron-sulfur (Fe-S) centers, to quinones in the respiratory chain. The immediate electron acceptor for the enzyme in this species is believed to be ubiquinone. Couples the redox reaction to proton translocation (for every two electrons transferred, four hydrogen ions are translocated across the cytoplasmic membrane), and thus conserves the redox energy in a proton gradient. The chain is NADH-quinone oxidoreductase subunit D from Wolbachia pipientis wMel.